Here is a 408-residue protein sequence, read N- to C-terminus: UPF0761 membrane protein Avin_36810 (408 aa).

The next 6 membrane-spanning stretches (helical) occupy residues 33 to 53, 92 to 112, 132 to 152, 174 to 194, 209 to 229, and 238 to 258; these read YTALFAVVPIMTLIFVVLSVV, HLTWLGVGVLMVTALLMLMTV, FLLHWAILSLGPLLLGTGFAL, LLKVMPLLFSTAAFTLLYVAV, LFAAVLFEAAKGLFGLYVALF, and AFAAVPLFLLWMYLSWMIVLL.

This sequence belongs to the UPF0761 family.

The protein localises to the cell inner membrane. The sequence is that of UPF0761 membrane protein Avin_36810 from Azotobacter vinelandii (strain DJ / ATCC BAA-1303).